We begin with the raw amino-acid sequence, 865 residues long: DNA topoisomerase 1 (865 aa).

Residues 3–142 (KALVIVESPA…RYSRVVFNEI (140 aa)) form the Toprim domain. Glu-9 provides a ligand contact to Mg(2+). Residues 37–65 (LPTSGSAAKKSADSTSTKTAKKPKKDERG) form a disordered region. Positions 39-54 (TSGSAAKKSADSTSTK) are enriched in low complexity. Asp-111 is a binding site for Mg(2+). The Topo IA-type catalytic domain maps to 158 to 575 (NINRVNAQQA…NFFSDFTQQL (418 aa)). The interaction with DNA stretch occupies residues 192–197 (SAGRVQ). Residue Tyr-319 is the O-(5'-phospho-DNA)-tyrosine intermediate of the active site. C4-type zinc fingers lie at residues 599 to 630 (CPTC…KERC), 662 to 689 (CQKC…NPTC), and 711 to 736 (CEKC…NDEC).

Belongs to the type IA topoisomerase family. In terms of assembly, monomer. The cofactor is Mg(2+).

It carries out the reaction ATP-independent breakage of single-stranded DNA, followed by passage and rejoining.. In terms of biological role, releases the supercoiling and torsional tension of DNA, which is introduced during the DNA replication and transcription, by transiently cleaving and rejoining one strand of the DNA duplex. Introduces a single-strand break via transesterification at a target site in duplex DNA. The scissile phosphodiester is attacked by the catalytic tyrosine of the enzyme, resulting in the formation of a DNA-(5'-phosphotyrosyl)-enzyme intermediate and the expulsion of a 3'-OH DNA strand. The free DNA strand then undergoes passage around the unbroken strand, thus removing DNA supercoils. Finally, in the religation step, the DNA 3'-OH attacks the covalent intermediate to expel the active-site tyrosine and restore the DNA phosphodiester backbone. This chain is DNA topoisomerase 1, found in Salmonella typhimurium (strain LT2 / SGSC1412 / ATCC 700720).